Reading from the N-terminus, the 436-residue chain is ATP-dependent protease ATPase subunit HslU (436 aa).

ATP-binding positions include Ile18, 60–65, Asp250, Glu314, and Arg386; that span reads GVGKTE.

It belongs to the ClpX chaperone family. HslU subfamily. As to quaternary structure, a double ring-shaped homohexamer of HslV is capped on each side by a ring-shaped HslU homohexamer. The assembly of the HslU/HslV complex is dependent on binding of ATP.

It is found in the cytoplasm. In terms of biological role, ATPase subunit of a proteasome-like degradation complex; this subunit has chaperone activity. The binding of ATP and its subsequent hydrolysis by HslU are essential for unfolding of protein substrates subsequently hydrolyzed by HslV. HslU recognizes the N-terminal part of its protein substrates and unfolds these before they are guided to HslV for hydrolysis. This is ATP-dependent protease ATPase subunit HslU from Mesorhizobium japonicum (strain LMG 29417 / CECT 9101 / MAFF 303099) (Mesorhizobium loti (strain MAFF 303099)).